Consider the following 85-residue polypeptide: UPF0335 protein Plav_2034 (85 aa).

Belongs to the UPF0335 family.

The polypeptide is UPF0335 protein Plav_2034 (Parvibaculum lavamentivorans (strain DS-1 / DSM 13023 / NCIMB 13966)).